We begin with the raw amino-acid sequence, 89 residues long: Putative membrane protein insertion efficiency factor (89 aa).

It belongs to the UPF0161 family.

Its subcellular location is the cell membrane. Functionally, could be involved in insertion of integral membrane proteins into the membrane. The polypeptide is Putative membrane protein insertion efficiency factor (Exiguobacterium sp. (strain ATCC BAA-1283 / AT1b)).